The chain runs to 140 residues: TPT1-like protein (140 aa).

The region spanning Met-6–Thr-140 is the TCTP domain.

Belongs to the TCTP family.

The chain is TPT1-like protein from Homo sapiens (Human).